We begin with the raw amino-acid sequence, 463 residues long: A-type ATP synthase subunit B (463 aa).

It belongs to the ATPase alpha/beta chains family. In terms of assembly, has multiple subunits with at least A(3), B(3), C, D, E, F, H, I and proteolipid K(x).

The protein localises to the cell membrane. Functionally, component of the A-type ATP synthase that produces ATP from ADP in the presence of a proton gradient across the membrane. The B chain is a regulatory subunit. The polypeptide is A-type ATP synthase subunit B (Methanothermobacter thermautotrophicus (strain ATCC 29096 / DSM 1053 / JCM 10044 / NBRC 100330 / Delta H) (Methanobacterium thermoautotrophicum)).